The following is a 209-amino-acid chain: Uracil phosphoribosyltransferase (209 aa).

Residues R79, R104, and 131–139 (DPMLATGGS) each bind 5-phospho-alpha-D-ribose 1-diphosphate. Residues I194 and 199–201 (GDA) contribute to the uracil site. D200 is a 5-phospho-alpha-D-ribose 1-diphosphate binding site.

It belongs to the UPRTase family. Mg(2+) is required as a cofactor.

The catalysed reaction is UMP + diphosphate = 5-phospho-alpha-D-ribose 1-diphosphate + uracil. The protein operates within pyrimidine metabolism; UMP biosynthesis via salvage pathway; UMP from uracil: step 1/1. With respect to regulation, allosterically activated by GTP. Functionally, catalyzes the conversion of uracil and 5-phospho-alpha-D-ribose 1-diphosphate (PRPP) to UMP and diphosphate. This Streptococcus equi subsp. zooepidemicus (strain MGCS10565) protein is Uracil phosphoribosyltransferase.